The following is a 1819-amino-acid chain: Non-reducing polyketide synthase nscA (1819 aa).

An N-terminal acylcarrier protein transacylase domain (SAT) region spans residues 25–277 (RRLDQHSKDR…PLPVYDGLCH (253 aa)). In terms of domain architecture, Ketosynthase family 3 (KS3) spans 413–846 (SSKLAIVGMA…GGNTTLLLED (434 aa)). Residues C586, H721, and H764 each act as for beta-ketoacyl synthase activity in the active site. A malonyl-CoA:ACP transacylase (MAT) domain region spans residues 952-1249 (FTSQGAYYHG…MIPSAPAMSS (298 aa)). The product template (PT) domain stretch occupies residues 1339-1658 (TSLVHQITAE…RLLMDRFFSP (320 aa)). Residues 1343 to 1479 (HQITAETVEA…AMIRFEDPMA (137 aa)) form an N-terminal hotdog fold region. In terms of domain architecture, PKS/mFAS DH spans 1343–1653 (HQITAETVEA…IRRVPRLLMD (311 aa)). The Proton acceptor; for dehydratase activity role is filled by H1375. The C-terminal hotdog fold stretch occupies residues 1507–1653 (ASRLSKPLAY…IRRVPRLLMD (147 aa)). Residue D1564 is the Proton donor; for dehydratase activity of the active site. Residues 1703–1742 (SSTMASKAPEPAPLLATSSESSTPKESPIVTPAESEREDP) are disordered. Low complexity predominate over residues 1719–1730 (TSSESSTPKESP). Residues 1742–1819 (PVDNNMISQC…EMTAWIEEYC (78 aa)) enclose the Carrier domain. O-(pantetheine 4'-phosphoryl)serine is present on S1779.

It depends on pantetheine 4'-phosphate as a cofactor.

It functions in the pathway secondary metabolite biosynthesis. Its function is as follows. Non-reducing polyketide synthase; part of the gene cluster that mediates the biosynthesis of neosartoricin B, a prenylated anthracenone that probably exhibits T-cell antiproliferative activity, suggestive of a physiological role as an immunosuppressive agent. The non-reducing polyketide synthase nscA probably synthesizes and cyclizes the decaketide backbone. The hydrolase nscB then mediates the product release through hydrolysis followed by spontaneous decarboxylation. The prenyltransferase nscD catalyzes the addition of the dimethylallyl group to the aromatic C5. The FAD-dependent monooxygenase nscC is then responsible for the stereospecific hydroxylation at C2. Neosartoricin B can be converted into two additional compounds neosartoricins C and D. Neosartoricin C is a spirocyclic compound that is cyclized through the attack of C3 hydroxyl on C14, followed by dehydration. On the other hand, neosartoricin D is a further cyclized compound in which attack of C2 on C14 in neosartoricin C results in the formation of the acetal-containing dioxabicyclo-octanone ring. Both of these compounds are novel and possibly represent related metabolites of the gene cluster. The protein is Non-reducing polyketide synthase nscA of Trichophyton verrucosum (strain HKI 0517).